Reading from the N-terminus, the 589-residue chain is Aspartate--tRNA(Asp/Asn) ligase (589 aa).

Glutamate 175 provides a ligand contact to L-aspartate. Residues 199-202 (QQLK) form an aspartate region. Residue arginine 221 participates in L-aspartate binding. ATP-binding positions include 221–223 (RDE) and glutamine 230. Histidine 451 lines the L-aspartate pocket. Position 485 (glutamate 485) interacts with ATP. Arginine 492 provides a ligand contact to L-aspartate. Residue 537–540 (GIDR) participates in ATP binding.

Belongs to the class-II aminoacyl-tRNA synthetase family. Type 1 subfamily. Homodimer.

The protein resides in the cytoplasm. The catalysed reaction is tRNA(Asx) + L-aspartate + ATP = L-aspartyl-tRNA(Asx) + AMP + diphosphate. In terms of biological role, aspartyl-tRNA synthetase with relaxed tRNA specificity since it is able to aspartylate not only its cognate tRNA(Asp) but also tRNA(Asn). Reaction proceeds in two steps: L-aspartate is first activated by ATP to form Asp-AMP and then transferred to the acceptor end of tRNA(Asp/Asn). In Roseiflexus sp. (strain RS-1), this protein is Aspartate--tRNA(Asp/Asn) ligase.